The sequence spans 119 residues: Large ribosomal subunit protein uL18 (119 aa).

Belongs to the universal ribosomal protein uL18 family. Part of the 50S ribosomal subunit; part of the 5S rRNA/L5/L18/L25 subcomplex. Contacts the 5S and 23S rRNAs.

Its function is as follows. This is one of the proteins that bind and probably mediate the attachment of the 5S RNA into the large ribosomal subunit, where it forms part of the central protuberance. This chain is Large ribosomal subunit protein uL18, found in Clostridium kluyveri (strain ATCC 8527 / DSM 555 / NBRC 12016 / NCIMB 10680 / K1).